The sequence spans 116 residues: Large ribosomal subunit protein bL20 (116 aa).

It belongs to the bacterial ribosomal protein bL20 family.

Its function is as follows. Binds directly to 23S ribosomal RNA and is necessary for the in vitro assembly process of the 50S ribosomal subunit. It is not involved in the protein synthesizing functions of that subunit. This is Large ribosomal subunit protein bL20 from Phocaeicola vulgatus (strain ATCC 8482 / DSM 1447 / JCM 5826 / CCUG 4940 / NBRC 14291 / NCTC 11154) (Bacteroides vulgatus).